The primary structure comprises 98 residues: Large ribosomal subunit protein eL14 (98 aa).

Belongs to the eukaryotic ribosomal protein eL14 family.

The protein is Large ribosomal subunit protein eL14 of Hyperthermus butylicus (strain DSM 5456 / JCM 9403 / PLM1-5).